A 617-amino-acid polypeptide reads, in one-letter code: Vitamin B12 transporter BtuB (617 aa).

The first 22 residues, 1-22 (MRKTFLAITCASLLSPTFYSQA), serve as a signal peptide directing secretion. Positions 29–36 (ETVVVTAN) match the TonB box motif. One can recognise a TBDR plug domain in the interval 40 to 154 (QIDGAVLAQT…ISGVINIITR (115 aa)). The region spanning 159 to 617 (DDSGRVSAGY…QYFVSADYRF (459 aa)) is the TBDR beta-barrel domain. Residues 600-617 (VGYVTPGRQYFVSADYRF) carry the TonB C-terminal box motif.

Belongs to the TonB-dependent receptor family. BtuB (TC 1.B.14.3.1) subfamily.

The protein localises to the cell outer membrane. Its function is as follows. Involved in the active translocation of vitamin B12 (cyanocobalamin) across the outer membrane to the periplasmic space. It derives its energy for transport by interacting with the trans-periplasmic membrane protein TonB. This Vibrio campbellii (strain ATCC BAA-1116) protein is Vitamin B12 transporter BtuB.